Here is a 641-residue protein sequence, read N- to C-terminus: Chaperone protein DnaK (641 aa).

Phosphothreonine; by autocatalysis is present on Thr-198. Basic and acidic residues-rich tracts occupy residues 514–529 (AEAN…EGVE), 540–554 (SSEK…KVSE), and 608–621 (AHAD…RSGD). Disordered regions lie at residues 514–554 (AEAN…KVSE) and 604–641 (QTES…KRSA). Residues 622–633 (DVVDADYEEVKD) are compositionally biased toward acidic residues.

The protein belongs to the heat shock protein 70 family.

Functionally, acts as a chaperone. This chain is Chaperone protein DnaK, found in Sinorhizobium medicae (strain WSM419) (Ensifer medicae).